The chain runs to 76 residues: Beta-defensin 121 (76 aa).

The signal sequence occupies residues 1–15; that stretch reads MKLLLLLLTVTLLLA. 3 disulfides stabilise this stretch: C23–C50, C30–C44, and C34–C51.

Belongs to the beta-defensin family. In terms of tissue distribution, abundant expression in the male reproductive tract only.

It localises to the secreted. Has antibacterial activity. The polypeptide is Beta-defensin 121 (DEFB121) (Homo sapiens (Human)).